A 394-amino-acid chain; its full sequence is Elongation factor Tu (394 aa).

Residues 10–204 (KPHVNVGTIG…ALDTYIPEPE (195 aa)) enclose the tr-type G domain. The tract at residues 19–26 (GHVDHGKT) is G1. 19–26 (GHVDHGKT) is a binding site for GTP. Threonine 26 contributes to the Mg(2+) binding site. Residues 60-64 (GITIN) are G2. The tract at residues 81–84 (DCPG) is G3. GTP-binding positions include 81–85 (DCPGH) and 136–139 (NKCD). Positions 136–139 (NKCD) are G4. Positions 174–176 (SAL) are G5.

Belongs to the TRAFAC class translation factor GTPase superfamily. Classic translation factor GTPase family. EF-Tu/EF-1A subfamily. In terms of assembly, monomer.

Its subcellular location is the cytoplasm. It carries out the reaction GTP + H2O = GDP + phosphate + H(+). Its function is as follows. GTP hydrolase that promotes the GTP-dependent binding of aminoacyl-tRNA to the A-site of ribosomes during protein biosynthesis. The protein is Elongation factor Tu of Shewanella halifaxensis (strain HAW-EB4).